Here is a 212-residue protein sequence, read N- to C-terminus: Pyridoxine/pyridoxamine 5'-phosphate oxidase (212 aa).

Residues 8-11 and Lys-66 contribute to the substrate site; that span reads RTDY. FMN-binding positions include 61-66, 76-77, Lys-83, and Gln-105; these read RIVLLK and FT. Substrate contacts are provided by Tyr-123, Arg-127, and Ser-131. FMN contacts are provided by residues 140 to 141 and Trp-184; that span reads QS. A substrate-binding site is contributed by 190–192; the sequence is RLH. Arg-194 is an FMN binding site.

This sequence belongs to the pyridoxamine 5'-phosphate oxidase family. Homodimer. FMN serves as cofactor.

The enzyme catalyses pyridoxamine 5'-phosphate + O2 + H2O = pyridoxal 5'-phosphate + H2O2 + NH4(+). It carries out the reaction pyridoxine 5'-phosphate + O2 = pyridoxal 5'-phosphate + H2O2. Its pathway is cofactor metabolism; pyridoxal 5'-phosphate salvage; pyridoxal 5'-phosphate from pyridoxamine 5'-phosphate: step 1/1. It participates in cofactor metabolism; pyridoxal 5'-phosphate salvage; pyridoxal 5'-phosphate from pyridoxine 5'-phosphate: step 1/1. In terms of biological role, catalyzes the oxidation of either pyridoxine 5'-phosphate (PNP) or pyridoxamine 5'-phosphate (PMP) into pyridoxal 5'-phosphate (PLP). This Ralstonia pickettii (strain 12J) protein is Pyridoxine/pyridoxamine 5'-phosphate oxidase.